Reading from the N-terminus, the 150-residue chain is 3-dehydroquinate dehydratase (150 aa).

The active-site Proton acceptor is Tyr26. Substrate-binding residues include Asn77, His83, and Asp90. Catalysis depends on His103, which acts as the Proton donor. Residues 104–105 (LS) and Arg114 contribute to the substrate site.

This sequence belongs to the type-II 3-dehydroquinase family. Homododecamer.

The enzyme catalyses 3-dehydroquinate = 3-dehydroshikimate + H2O. The protein operates within metabolic intermediate biosynthesis; chorismate biosynthesis; chorismate from D-erythrose 4-phosphate and phosphoenolpyruvate: step 3/7. Functionally, catalyzes a trans-dehydration via an enolate intermediate. The sequence is that of 3-dehydroquinate dehydratase from Vibrio cholerae serotype O1 (strain ATCC 39541 / Classical Ogawa 395 / O395).